The following is a 331-amino-acid chain: MFARPAIRACQSLKQPVRRYTNTPPPQSGNANNSRVGILIASAVGMAGFGTYFMFGQGTTPAAGVKALGAEPKKALEMEKGFVSLQLDDVEVVNHNTKRLRFKLPEDDMVSGLHVASALLTKFKPEGAEKPVLRPYTPISDEDQKGYLDLIVKKYEGGPMSTHIHELVPGQKLDFKGPLPKYEWSANKHPHVAMIAGGTGITPMYQIMRAIFKNPADKTKVTLVVGNITEEDILLKKQLAELENTYPQRFRAFYVLDNPPKDWAGTKGYITKDLLKTVLPEPKEENIKVFVCGPPGMMKAISGNKVSPKDQGEVSGILKELGYKQDQIYKF.

A helical membrane pass occupies residues 36–56; that stretch reads VGILIASAVGMAGFGTYFMFG. One can recognise an FAD-binding FR-type domain in the interval 80–185; that stretch reads KGFVSLQLDD…KGPLPKYEWS (106 aa). 188-223 contacts FAD; that stretch reads KHPHVAMIAGGTGITPMYQIMRAIFKNPADKTKVTL.

Belongs to the flavoprotein pyridine nucleotide cytochrome reductase family. It depends on FAD as a cofactor.

The protein resides in the mitochondrion outer membrane. The catalysed reaction is 2 Fe(III)-[cytochrome b5] + NADH = 2 Fe(II)-[cytochrome b5] + NAD(+) + H(+). In terms of biological role, may mediate the reduction of outer membrane cytochrome b5. This is NADH-cytochrome b5 reductase 2 (MCR1) from Pyricularia oryzae (strain 70-15 / ATCC MYA-4617 / FGSC 8958) (Rice blast fungus).